Reading from the N-terminus, the 391-residue chain is MNAGALSRMLSEGLAARRAEGLYRSPRVLKSVDGACGLTADGRTVVVFCANDYLGLASDPRPGRVMARVAEEQGAGSGAAHLVSGHRPEHEALERALADWTGREAALLFSTGYMANLGVIDALVGRGDTVFEDRLNHASLLDGARLSGARLRRYRHGDVDHLARRLAEDGGRHRLIVTDGVFSMDGDRAPVAELARLARDHGAWLMVDDAHGLGVLGEKGGGLLEQSGLDQDDVPVLVGTLGKAVGSFGAFVAGRRLLIDHLVQSARTWIYTTAPSPAQTAATVEAVRLARHETWRREHLRALVRRFRAGIADLGLDLMPSETPIQPIVVGEADQALQASRALEERGYLVTAIRPPTVPKGTARLRVTLSAAHTPQQVDGLVAALGQVLGQ.

Arg24 contributes to the substrate binding site. 112-113 provides a ligand contact to pyridoxal 5'-phosphate; the sequence is GY. His137 is a substrate binding site. Pyridoxal 5'-phosphate contacts are provided by Ser183, His211, and Thr240. Lys243 is subject to N6-(pyridoxal phosphate)lysine. Substrate is bound at residue Thr357.

This sequence belongs to the class-II pyridoxal-phosphate-dependent aminotransferase family. BioF subfamily. As to quaternary structure, homodimer. The cofactor is pyridoxal 5'-phosphate.

The catalysed reaction is 6-carboxyhexanoyl-[ACP] + L-alanine + H(+) = (8S)-8-amino-7-oxononanoate + holo-[ACP] + CO2. Its pathway is cofactor biosynthesis; biotin biosynthesis. In terms of biological role, catalyzes the decarboxylative condensation of pimeloyl-[acyl-carrier protein] and L-alanine to produce 8-amino-7-oxononanoate (AON), [acyl-carrier protein], and carbon dioxide. This Alkalilimnicola ehrlichii (strain ATCC BAA-1101 / DSM 17681 / MLHE-1) protein is 8-amino-7-oxononanoate synthase.